We begin with the raw amino-acid sequence, 221 residues long: Orotidine 5'-phosphate decarboxylase (221 aa).

Residues Asp-12, Lys-34, 60–69 (DFKVADIPNT), Ser-117, 170–180 (PGVGAQGGKAS), Gly-193, and Arg-194 contribute to the substrate site. Lys-62 serves as the catalytic Proton donor.

This sequence belongs to the OMP decarboxylase family. Type 1 subfamily. Homodimer.

It carries out the reaction orotidine 5'-phosphate + H(+) = UMP + CO2. The protein operates within pyrimidine metabolism; UMP biosynthesis via de novo pathway; UMP from orotate: step 2/2. Catalyzes the decarboxylation of orotidine 5'-monophosphate (OMP) to uridine 5'-monophosphate (UMP). The sequence is that of Orotidine 5'-phosphate decarboxylase from Methanosarcina acetivorans (strain ATCC 35395 / DSM 2834 / JCM 12185 / C2A).